The sequence spans 54 residues: Large ribosomal subunit protein bL33A (54 aa).

This sequence belongs to the bacterial ribosomal protein bL33 family.

The polypeptide is Large ribosomal subunit protein bL33A (Mycobacterium marinum (strain ATCC BAA-535 / M)).